We begin with the raw amino-acid sequence, 219 residues long: Ribonuclease HII (219 aa).

Positions 22–219 constitute an RNase H type-2 domain; that stretch reads GLVAGVDEVG…LLAMRMEAVV (198 aa). Residues D28, E29, and D125 each coordinate a divalent metal cation.

It belongs to the RNase HII family. The cofactor is Mn(2+). Mg(2+) serves as cofactor.

The protein resides in the cytoplasm. The catalysed reaction is Endonucleolytic cleavage to 5'-phosphomonoester.. Endonuclease that specifically degrades the RNA of RNA-DNA hybrids. The polypeptide is Ribonuclease HII (Granulibacter bethesdensis (strain ATCC BAA-1260 / CGDNIH1)).